The primary structure comprises 526 residues: Rho guanine nucleotide exchange factor 3 (526 aa).

The disordered stretch occupies residues 20–40 (ELPPASGPAKDAEEPSNKRVK). Residues serine 47 and serine 70 each carry the phosphoserine modification. The DH domain maps to 122-304 (KRQEAIFELS…QGIVAEINTK (183 aa)). One can recognise a PH domain in the interval 291–449 (INIIQGIVAE…WLNCIRQAKE (159 aa)). Residues 464–526 (EGSFLNPTTG…GNSRHGESNV (63 aa)) are disordered. The span at 466-475 (SFLNPTTGSR) shows a compositional bias: polar residues.

In terms of assembly, interacts with RHOA and RHOB.

Its subcellular location is the cytoplasm. In terms of biological role, acts as a guanine nucleotide exchange factor (GEF) for RhoA and RhoB GTPases. In Pongo abelii (Sumatran orangutan), this protein is Rho guanine nucleotide exchange factor 3 (ARHGEF3).